The primary structure comprises 378 residues: AA13 family lytic polysaccharide monooxygenase A (378 aa).

Positions 1–17 (MKWSVIQALALASGVQA) are cleaved as a signal peptide. His18 is a Cu(2+) binding site. His18 carries the methylhistidine modification. Residues 18–244 (HGYLTFPMSR…PQIYLTCADI (227 aa)) form the Chitin-binding type-4 domain. 7 disulfide bridges follow: Cys39–Cys42, Cys65–Cys241, Cys101–Cys199, Cys117–Cys144, Cys152–Cys160, Cys166–Cys172, and Cys180–Cys188. His108 lines the Cu(2+) pocket. N-linked (GlcNAc...) asparagine glycosylation occurs at Asn221. Residue Tyr238 coordinates Cu(2+). Over residues 250-263 (DSQSPPTTTTTSTP) the composition is skewed to low complexity. The tract at residues 250–272 (DSQSPPTTTTTSTPASPPPTSCA) is disordered. In terms of domain architecture, CBM20 spans 272–378 (ATPAASVAVT…GTATVDTAWK (107 aa)).

The protein belongs to the polysaccharide monooxygenase AA13 family. The cofactor is Cu(2+). In terms of processing, O-mannosylated.

It is found in the secreted. The catalysed reaction is starch + reduced acceptor + O2 = D-glucono-1,5-lactone-terminated malto-oligosaccharides + short-chain malto-oligosaccharides + acceptor + H2O.. Its activity is regulated as follows. Activity is inhibited by both beta-cyclodextrin or amylose that block the access to the active site. Functionally, starch-active lytic polysaccharide monooxygenase that oxidizes the C1 position of starch substrates. Catalysis by LPMOs requires the reduction of the active-site copper from Cu(II) to Cu(I) by a reducing agent and H(2)O(2) or O(2) as a cosubstrate. This is AA13 family lytic polysaccharide monooxygenase A from Pyricularia oryzae (strain 70-15 / ATCC MYA-4617 / FGSC 8958) (Rice blast fungus).